The chain runs to 307 residues: Ribonuclease Z (307 aa).

Residues H63, H65, D67, H68, H141, D212, and H270 each contribute to the Zn(2+) site. The active-site Proton acceptor is D67.

This sequence belongs to the RNase Z family. In terms of assembly, homodimer. Requires Zn(2+) as cofactor.

The enzyme catalyses Endonucleolytic cleavage of RNA, removing extra 3' nucleotides from tRNA precursor, generating 3' termini of tRNAs. A 3'-hydroxy group is left at the tRNA terminus and a 5'-phosphoryl group is left at the trailer molecule.. Functionally, zinc phosphodiesterase, which displays some tRNA 3'-processing endonuclease activity. Probably involved in tRNA maturation, by removing a 3'-trailer from precursor tRNA. The polypeptide is Ribonuclease Z (Bacillus mycoides (strain KBAB4) (Bacillus weihenstephanensis)).